We begin with the raw amino-acid sequence, 226 residues long: MVKLGCSFSGKPGKETGDQDGAAMDSVPLISPLDVSQLQPSFPDQVVIKTQTEYQLTSADQPKKFADLEGQRLACSHPEEGRRLPTARMIAFAMALLGCVLIMYKAIWYDQFTCPDGFLLRHKICTPLTLEMYYTEMDPERHRSILAAIGAYPLSRKHGTEMPAIWGNSYRAGKEEHKGTTPAAMTVSTAAAAAAAEGNEPSGKPLDMREKEDPQKAEDVPSQSPK.

Positions 1–23 (MVKLGCSFSGKPGKETGDQDGAA) are disordered. At 1 to 88 (MVKLGCSFSG…EEGRRLPTAR (88 aa)) the chain is on the extracellular side. The helical transmembrane segment at 89 to 109 (MIAFAMALLGCVLIMYKAIWY) threads the bilayer. At 110–226 (DQFTCPDGFL…AEDVPSQSPK (117 aa)) the chain is on the cytoplasmic side. Positions 189–226 (TAAAAAAAEGNEPSGKPLDMREKEDPQKAEDVPSQSPK) are disordered. Positions 206-219 (LDMREKEDPQKAED) are enriched in basic and acidic residues.

This sequence belongs to the NSG family. In terms of assembly, interacts with CLTA. As to expression, expressed exclusively in neurons (at protein level). In all age groups, expressed at significantly higher levels in the medial prefrontal and orbital frontal cortices of spontaneously hypertensive rats (SHR), a model of attention deficit-hyperactivity disorder, than Wistar Kyoto (WKY) animals. In the motor cortex, dorsal striatum and nucleus accumbens, expression is significantly elevated in SHR only in younger animals.

The protein resides in the cytoplasmic vesicle membrane. It is found in the cell membrane. Interacts with clathrin light chain A and stimulates clathrin self-assembly and clathrin-mediated endocytosis. The chain is Neuron-specific vesicular protein calcyon (Caly) from Rattus norvegicus (Rat).